The primary structure comprises 485 residues: MNEESNMGGVFKEEEAQSGDVVDFEGDSDTHNPQNWPMGKKVYTTALWALTTCWITFASAIYSAGTAEISEEFHVSYEVANAGTSLLIFGFALGPMLWAPLCEVYGRKWPALAPYFISAAFAFGTATAKDIQTILITRFFAGVFGSSPISITGGSIVDIWTPRQRGTPMVCYGITIAAAPTLGPIIGGAFIASGCGWRWTEYLTGIVMMVQFVLDALWLDESHADVLLTRKASRLRRSTGNFSLHAKWEETSPTFKSLLSTYLVRPFQMLLDPICLLLTIYTSFVYAILYASLESFALEYGRFRRWGPVVSQLPFLSLLIGCLFAAAANIFNNIYYGKKLVANNFKPVPEARLPPMMVGGFAFSAGLFLFGWTSVEHVSSPWPSIIGVFLTGVGFTTIFQSSLQYLVDTFTRYSASAIAANTFVRSMAAGAFPLFVWPMYEKIGIDWGSTIFACISVLLLPAPFLFFKWGYRIRARGEFSKLSTY.

6 consecutive transmembrane segments (helical) span residues 42 to 62 (VYTTALWALTTCWITFASAIY), 86 to 106 (LLIFGFALGPMLWAPLCEVYG), 108 to 128 (KWPALAPYFISAAFAFGTATA), 139 to 159 (FFAGVFGSSPISITGGSIVDI), 172 to 192 (YGITIAAAPTLGPIIGGAFIA), and 199 to 219 (WTEYLTGIVMMVQFVLDALWL). A glycan (N-linked (GlcNAc...) asparagine) is linked at Asn-241. Transmembrane regions (helical) follow at residues 269-289 (MLLDPICLLLTIYTSFVYAIL), 306-326 (WGPVVSQLPFLSLLIGCLFAA), 353-373 (LPPMMVGGFAFSAGLFLFGWT), 379-399 (SSPWPSIIGVFLTGVGFTTIF), 417-437 (AIAANTFVRSMAAGAFPLFVW), and 447-467 (WGSTIFACISVLLLPAPFLFF).

This sequence belongs to the major facilitator superfamily.

It localises to the membrane. Functionally, efflux pump; part of the gene cluster that mediates the biosynthesis of bikaverin, a red pigment also considered as a mycotoxin. The chain is Efflux pump bik6 from Gibberella fujikuroi (strain CBS 195.34 / IMI 58289 / NRRL A-6831) (Bakanae and foot rot disease fungus).